The chain runs to 555 residues: Inositol 1,4,5-triphosphate receptor associated 2 (555 aa).

Topologically, residues 1-495 (MESTPFSGVA…LKSSIRKANK (495 aa)) are cytoplasmic. 2 disordered regions span residues 84-103 (SLPLPRHTSSTDGTITSSDP) and 128-147 (RSASPTIEAQGTSPAHDNIA). Thr91 bears the Phosphothreonine mark. Over residues 91 to 102 (TSSTDGTITSSD) the composition is skewed to low complexity. A compositionally biased stretch (polar residues) spans 129–142 (SASPTIEAQGTSPA). Residues 227–341 (TLEKRVKLEE…LEELKQVLLQ (115 aa)) are a coiled coil. Ser363, Ser370, and Ser424 each carry phosphoserine. Positions 437-469 (ELKTKDDSEPSGEETVERTRKPSLSEKKNNPSK) are disordered. Over residues 451–465 (TVERTRKPSLSEKKN) the composition is skewed to basic and acidic residues. Residues 496 to 516 (ALWLSIAFIVLFAALMSFLTG) traverse the membrane as a helical; Anchor for type IV membrane protein segment. Residues 517-555 (QLFQKSVDAAPTQQEDSWTSLEHILWPFTRLRHNGPPPV) lie on the Lumenal side of the membrane.

The protein belongs to the IRAG2 family. As to quaternary structure, interacts (via coiled-coil domain) with ITPR3. Interacts with SUN1 and SUN2. Interacts with microtubules. Interacts with HCN4; regulates HCN4 channel activity. In terms of processing, the removal of the C-terminal lumenal domain occurs by proteolytic processing. Expressed at high levels in pre B-cells, mature B-cells and pre T-cells. Expressed at low levels in mature T-cells and plasma B-cells. Expressed in germinal center B-cells, splenic marginal zone cells and B-cell lymphomas. Expressed in neuronal cells in the cerebral cortex, epithelial cells in tonsil, adrenal glands, zymogen-producing cells in the stomach and epithelial cells in seminal vesicles.

It is found in the cytoplasm. It localises to the endoplasmic reticulum membrane. Its subcellular location is the nucleus envelope. The protein resides in the cytoskeleton. The protein localises to the microtubule organizing center. It is found in the centrosome. It localises to the spindle pole. Its subcellular location is the chromosome. In terms of biological role, plays a role in the delivery of peptides to major histocompatibility complex (MHC) class I molecules; this occurs in a transporter associated with antigen processing (TAP)-independent manner. May play a role in taste signal transduction via ITPR3. May play a role during fertilization in pronucleus congression and fusion. Plays a role in maintaining nuclear shape, maybe as a component of the LINC complex and through interaction with microtubules. Plays a role in the regulation of cellular excitability by regulating the hyperpolarization-activated cyclic nucleotide-gated HCN4 channel activity. The sequence is that of Inositol 1,4,5-triphosphate receptor associated 2 from Homo sapiens (Human).